We begin with the raw amino-acid sequence, 201 residues long: 3-isopropylmalate dehydratase small subunit (201 aa).

It belongs to the LeuD family. LeuD type 1 subfamily. Heterodimer of LeuC and LeuD.

It carries out the reaction (2R,3S)-3-isopropylmalate = (2S)-2-isopropylmalate. It functions in the pathway amino-acid biosynthesis; L-leucine biosynthesis; L-leucine from 3-methyl-2-oxobutanoate: step 2/4. Its function is as follows. Catalyzes the isomerization between 2-isopropylmalate and 3-isopropylmalate, via the formation of 2-isopropylmaleate. The protein is 3-isopropylmalate dehydratase small subunit of Azorhizobium caulinodans (strain ATCC 43989 / DSM 5975 / JCM 20966 / LMG 6465 / NBRC 14845 / NCIMB 13405 / ORS 571).